Here is a 230-residue protein sequence, read N- to C-terminus: Cytidylate kinase (230 aa).

Residue 12–20 coordinates ATP; it reads GPSGAGKGT.

It belongs to the cytidylate kinase family. Type 1 subfamily.

It localises to the cytoplasm. The enzyme catalyses CMP + ATP = CDP + ADP. It catalyses the reaction dCMP + ATP = dCDP + ADP. In Shewanella loihica (strain ATCC BAA-1088 / PV-4), this protein is Cytidylate kinase.